The following is a 187-amino-acid chain: Lysozyme C-like protein DDB_G0288143 (187 aa).

Residues 1 to 23 (MKVSNLISTITIASALCLSLTNA) form the signal peptide. 3 disulfides stabilise this stretch: cysteine 50/cysteine 125, cysteine 74/cysteine 82, and cysteine 78/cysteine 97. Residue glutamate 55 is part of the active site. Residues 133-187 (QHGSHSSTSRDSSSSSSRDSTGTGYSSSGSGTSGSGSNSGQTGHFIPGQSGHGLN) form a disordered region. A compositionally biased stretch (low complexity) spans 136-175 (SHSSTSRDSSSSSSRDSTGTGYSSSGSGTSGSGSNSGQTG).

It belongs to the glycosyl hydrolase 22 family.

In Dictyostelium discoideum (Social amoeba), this protein is Lysozyme C-like protein DDB_G0288143.